Consider the following 151-residue polypeptide: Large ribosomal subunit protein bL9 (151 aa).

It belongs to the bacterial ribosomal protein bL9 family.

Its function is as follows. Binds to the 23S rRNA. The polypeptide is Large ribosomal subunit protein bL9 (Bordetella pertussis (strain Tohama I / ATCC BAA-589 / NCTC 13251)).